We begin with the raw amino-acid sequence, 337 residues long: DNA-directed RNA polymerase subunit alpha (337 aa).

Residues 1 to 232 (MVREEVRVCT…IDLFIPFLHA (232 aa)) are alpha N-terminal domain (alpha-NTD). The tract at residues 266–337 (EISFQCIFID…FAIDLPKNKF (72 aa)) is alpha C-terminal domain (alpha-CTD).

This sequence belongs to the RNA polymerase alpha chain family. As to quaternary structure, in plastids the minimal PEP RNA polymerase catalytic core is composed of four subunits: alpha, beta, beta', and beta''. When a (nuclear-encoded) sigma factor is associated with the core the holoenzyme is formed, which can initiate transcription.

It localises to the plastid. Its subcellular location is the chloroplast. It carries out the reaction RNA(n) + a ribonucleoside 5'-triphosphate = RNA(n+1) + diphosphate. Functionally, DNA-dependent RNA polymerase catalyzes the transcription of DNA into RNA using the four ribonucleoside triphosphates as substrates. This Buxus microphylla (Littleleaf boxwood) protein is DNA-directed RNA polymerase subunit alpha.